The chain runs to 160 residues: Protein-export protein SecB (160 aa).

This sequence belongs to the SecB family. In terms of assembly, homotetramer, a dimer of dimers. One homotetramer interacts with 1 SecA dimer.

The protein resides in the cytoplasm. In terms of biological role, one of the proteins required for the normal export of preproteins out of the cell cytoplasm. It is a molecular chaperone that binds to a subset of precursor proteins, maintaining them in a translocation-competent state. It also specifically binds to its receptor SecA. This is Protein-export protein SecB from Azorhizobium caulinodans (strain ATCC 43989 / DSM 5975 / JCM 20966 / LMG 6465 / NBRC 14845 / NCIMB 13405 / ORS 571).